Reading from the N-terminus, the 416-residue chain is uncharacterized protein (416 aa).

The N-acetyltransferase domain maps to 3 to 150 (LDVRTITPSE…SVYRAGLDAR (148 aa)). Residues 83–85 (VTV) and 91–96 (RRGLLS) contribute to the acetyl-CoA site. The Proton donor role is filled by tyrosine 124. The Proton acceptor; via carboxylate role is filled by phenylalanine 416.

The protein belongs to the acetyltransferase Eis family. In terms of assembly, homohexamer; trimer of dimers.

This is an uncharacterized protein from Streptomyces griseus subsp. griseus (strain JCM 4626 / CBS 651.72 / NBRC 13350 / KCC S-0626 / ISP 5235).